Reading from the N-terminus, the 332-residue chain is Glycerol-3-phosphate dehydrogenase [NAD(P)+] (332 aa).

Residues Trp11, Arg30, and Lys108 each contribute to the NADPH site. Sn-glycerol 3-phosphate-binding residues include Lys108, Gly137, and Ser139. Ala141 is a binding site for NADPH. Sn-glycerol 3-phosphate-binding residues include Lys192, Asp245, Ser255, Arg256, and Asn257. The active-site Proton acceptor is the Lys192. Arg256 contributes to the NADPH binding site. The NADPH site is built by Val280 and Glu282.

Belongs to the NAD-dependent glycerol-3-phosphate dehydrogenase family.

The protein localises to the cytoplasm. It carries out the reaction sn-glycerol 3-phosphate + NAD(+) = dihydroxyacetone phosphate + NADH + H(+). The catalysed reaction is sn-glycerol 3-phosphate + NADP(+) = dihydroxyacetone phosphate + NADPH + H(+). It functions in the pathway membrane lipid metabolism; glycerophospholipid metabolism. Its function is as follows. Catalyzes the reduction of the glycolytic intermediate dihydroxyacetone phosphate (DHAP) to sn-glycerol 3-phosphate (G3P), the key precursor for phospholipid synthesis. This is Glycerol-3-phosphate dehydrogenase [NAD(P)+] from Burkholderia cenocepacia (strain ATCC BAA-245 / DSM 16553 / LMG 16656 / NCTC 13227 / J2315 / CF5610) (Burkholderia cepacia (strain J2315)).